We begin with the raw amino-acid sequence, 334 residues long: Holliday junction branch migration complex subunit RuvB (334 aa).

The tract at residues 4–184 (ADRLIQPQLQ…FGIPLRLEFY (181 aa)) is large ATPase domain (RuvB-L). Residues Arg24, Gly65, Lys68, Thr69, Thr70, 131–133 (EDY), Arg174, Tyr184, and Arg221 contribute to the ATP site. Residue Thr69 coordinates Mg(2+). Residues 185–255 (NVKDLSTIVT…VAEQALDLLD (71 aa)) are small ATPAse domain (RuvB-S). Residues 258–334 (GEGFDYMDRK…YLHFGMIKPE (77 aa)) are head domain (RuvB-H). Residues Arg294, Arg313, and Arg318 each contribute to the DNA site.

Belongs to the RuvB family. In terms of assembly, homohexamer. Forms an RuvA(8)-RuvB(12)-Holliday junction (HJ) complex. HJ DNA is sandwiched between 2 RuvA tetramers; dsDNA enters through RuvA and exits via RuvB. An RuvB hexamer assembles on each DNA strand where it exits the tetramer. Each RuvB hexamer is contacted by two RuvA subunits (via domain III) on 2 adjacent RuvB subunits; this complex drives branch migration. In the full resolvosome a probable DNA-RuvA(4)-RuvB(12)-RuvC(2) complex forms which resolves the HJ.

It localises to the cytoplasm. It catalyses the reaction ATP + H2O = ADP + phosphate + H(+). Its function is as follows. The RuvA-RuvB-RuvC complex processes Holliday junction (HJ) DNA during genetic recombination and DNA repair, while the RuvA-RuvB complex plays an important role in the rescue of blocked DNA replication forks via replication fork reversal (RFR). RuvA specifically binds to HJ cruciform DNA, conferring on it an open structure. The RuvB hexamer acts as an ATP-dependent pump, pulling dsDNA into and through the RuvAB complex. RuvB forms 2 homohexamers on either side of HJ DNA bound by 1 or 2 RuvA tetramers; 4 subunits per hexamer contact DNA at a time. Coordinated motions by a converter formed by DNA-disengaged RuvB subunits stimulates ATP hydrolysis and nucleotide exchange. Immobilization of the converter enables RuvB to convert the ATP-contained energy into a lever motion, pulling 2 nucleotides of DNA out of the RuvA tetramer per ATP hydrolyzed, thus driving DNA branch migration. The RuvB motors rotate together with the DNA substrate, which together with the progressing nucleotide cycle form the mechanistic basis for DNA recombination by continuous HJ branch migration. Branch migration allows RuvC to scan DNA until it finds its consensus sequence, where it cleaves and resolves cruciform DNA. The sequence is that of Holliday junction branch migration complex subunit RuvB from Shewanella sp. (strain ANA-3).